The primary structure comprises 169 residues: Regulator of ribonuclease activity A (169 aa).

It belongs to the RraA family. As to quaternary structure, homotrimer. Binds to both RNA-binding sites in the C-terminal region of Rne and to RhlB.

It is found in the cytoplasm. Globally modulates RNA abundance by binding to RNase E (Rne) and regulating its endonucleolytic activity. Can modulate Rne action in a substrate-dependent manner by altering the composition of the degradosome. Modulates RNA-binding and helicase activities of the degradosome. The polypeptide is Regulator of ribonuclease activity A (Photorhabdus laumondii subsp. laumondii (strain DSM 15139 / CIP 105565 / TT01) (Photorhabdus luminescens subsp. laumondii)).